Here is an 845-residue protein sequence, read N- to C-terminus: Leucine--tRNA ligase (845 aa).

Residues 40–51 carry the 'HIGH' region motif; sequence PYPSGAGLHVGH. A 'KMSKS' region motif is present at residues 623–627; sequence KMSKS. Lys-626 provides a ligand contact to ATP.

Belongs to the class-I aminoacyl-tRNA synthetase family.

Its subcellular location is the cytoplasm. It carries out the reaction tRNA(Leu) + L-leucine + ATP = L-leucyl-tRNA(Leu) + AMP + diphosphate. The chain is Leucine--tRNA ligase from Protochlamydia amoebophila (strain UWE25).